A 380-amino-acid polypeptide reads, in one-letter code: uncharacterized protein (380 aa).

This is an uncharacterized protein from Sinorhizobium fredii (strain NBRC 101917 / NGR234).